Consider the following 350-residue polypeptide: Inositol 2-dehydrogenase/D-chiro-inositol 3-dehydrogenase (350 aa).

This sequence belongs to the Gfo/Idh/MocA family. Homotetramer.

It catalyses the reaction myo-inositol + NAD(+) = scyllo-inosose + NADH + H(+). The catalysed reaction is 1D-chiro-inositol + NAD(+) = scyllo-inosine + NADH + H(+). The protein operates within polyol metabolism; myo-inositol degradation into acetyl-CoA; acetyl-CoA from myo-inositol: step 1/7. Functionally, involved in the oxidation of myo-inositol (MI) and D-chiro-inositol (DCI) to 2-keto-myo-inositol (2KMI or 2-inosose) and 1-keto-D-chiro-inositol (1KDCI), respectively. The polypeptide is Inositol 2-dehydrogenase/D-chiro-inositol 3-dehydrogenase (Lactiplantibacillus plantarum (strain ATCC BAA-793 / NCIMB 8826 / WCFS1) (Lactobacillus plantarum)).